The following is a 479-amino-acid chain: Ribulose bisphosphate carboxylase large chain (479 aa).

Residues 1-2 constitute a propeptide that is removed on maturation; the sequence is MS. Residues asparagine 123 and threonine 173 each contribute to the substrate site. Lysine 175 (proton acceptor) is an active-site residue. Residue lysine 177 participates in substrate binding. Residues lysine 201, aspartate 203, and glutamate 204 each contribute to the Mg(2+) site. Lysine 201 carries the post-translational modification N6-carboxylysine. Serine 208 is modified (phosphoserine). The active-site Proton acceptor is histidine 294. Positions 295 and 327 each coordinate substrate. Threonine 330 is subject to Phosphothreonine. Serine 379 lines the substrate pocket.

The protein belongs to the RuBisCO large chain family. Type I subfamily. As to quaternary structure, heterohexadecamer of 8 large chains and 8 small chains; disulfide-linked. The disulfide link is formed within the large subunit homodimers. It depends on Mg(2+) as a cofactor. Post-translationally, the disulfide bond which can form in the large chain dimeric partners within the hexadecamer appears to be associated with oxidative stress and protein turnover.

The protein resides in the plastid. Its subcellular location is the chloroplast. It carries out the reaction 2 (2R)-3-phosphoglycerate + 2 H(+) = D-ribulose 1,5-bisphosphate + CO2 + H2O. The catalysed reaction is D-ribulose 1,5-bisphosphate + O2 = 2-phosphoglycolate + (2R)-3-phosphoglycerate + 2 H(+). In terms of biological role, ruBisCO catalyzes two reactions: the carboxylation of D-ribulose 1,5-bisphosphate, the primary event in carbon dioxide fixation, as well as the oxidative fragmentation of the pentose substrate in the photorespiration process. Both reactions occur simultaneously and in competition at the same active site. The protein is Ribulose bisphosphate carboxylase large chain of Olimarabidopsis pumila (Dwarf rocket).